A 458-amino-acid polypeptide reads, in one-letter code: Cytoplasmic tRNA 2-thiolation protein 2 (458 aa).

This sequence belongs to the CTU2/NCS2 family.

It localises to the cytoplasm. It functions in the pathway tRNA modification; 5-methoxycarbonylmethyl-2-thiouridine-tRNA biosynthesis. Functionally, plays a central role in 2-thiolation of mcm(5)S(2)U at tRNA wobble positions of tRNA(Lys), tRNA(Glu) and tRNA(Gln). May act by forming a heterodimer with NCS6/CTU1 that ligates sulfur from thiocarboxylated URM1 onto the uridine of tRNAs at wobble position. The polypeptide is Cytoplasmic tRNA 2-thiolation protein 2 (Arabidopsis thaliana (Mouse-ear cress)).